The chain runs to 145 residues: Bacilliredoxin SERP1075 (145 aa).

This sequence belongs to the bacilliredoxin family.

This Staphylococcus epidermidis (strain ATCC 35984 / DSM 28319 / BCRC 17069 / CCUG 31568 / BM 3577 / RP62A) protein is Bacilliredoxin SERP1075.